The sequence spans 127 residues: Anti-adapter protein IraD (127 aa).

This sequence belongs to the GpW/Gp25 family. IraD subfamily. Interacts with RssB.

It localises to the cytoplasm. Inhibits RpoS proteolysis by regulating RssB activity, thereby increasing the stability of the sigma stress factor RpoS during oxidative stress. Its effect on RpoS stability is due to its interaction with RssB, which probably blocks the interaction of RssB with RpoS, and the consequent delivery of the RssB-RpoS complex to the ClpXP protein degradation pathway. This chain is Anti-adapter protein IraD, found in Escherichia coli O127:H6 (strain E2348/69 / EPEC).